The chain runs to 178 residues: Orotate phosphoribosyltransferase (178 aa).

5-phospho-alpha-D-ribose 1-diphosphate is bound by residues Arg-92, Lys-93, Lys-96, and 118–126 (EDVTTTGGS). Residues Thr-122 and Arg-150 each contribute to the orotate site.

This sequence belongs to the purine/pyrimidine phosphoribosyltransferase family. PyrE subfamily. Homodimer. It depends on Mg(2+) as a cofactor.

It catalyses the reaction orotidine 5'-phosphate + diphosphate = orotate + 5-phospho-alpha-D-ribose 1-diphosphate. Its pathway is pyrimidine metabolism; UMP biosynthesis via de novo pathway; UMP from orotate: step 1/2. Catalyzes the transfer of a ribosyl phosphate group from 5-phosphoribose 1-diphosphate to orotate, leading to the formation of orotidine monophosphate (OMP). This chain is Orotate phosphoribosyltransferase, found in Methanosphaera stadtmanae (strain ATCC 43021 / DSM 3091 / JCM 11832 / MCB-3).